The following is a 91-amino-acid chain: MEIKLINIGFGNIVSANRIIAIVSPESAPIKRIITEARDRGMLIDATYGRRTRAVIITDSDHVILSAVQPETVAHRLVSKEAPAQAEESAD.

This sequence belongs to the RemA family.

The protein is Putative regulatory protein PTH_1796 of Pelotomaculum thermopropionicum (strain DSM 13744 / JCM 10971 / SI).